The primary structure comprises 60 residues: uncharacterized protein (60 aa).

The helical transmembrane segment at 33-55 (FRLLRGIFLITLVIWTVVWLKLL) threads the bilayer.

It belongs to the HHV-5 UL2 protein family.

The protein localises to the host membrane. This is an uncharacterized protein from Human cytomegalovirus (strain AD169) (HHV-5).